A 247-amino-acid polypeptide reads, in one-letter code: Pyridoxine 5'-phosphate synthase (247 aa).

Residue Asn-12 coordinates 3-amino-2-oxopropyl phosphate. Position 14–15 (14–15 (DH)) interacts with 1-deoxy-D-xylulose 5-phosphate. Arg-23 contacts 3-amino-2-oxopropyl phosphate. His-48 acts as the Proton acceptor in catalysis. 2 residues coordinate 1-deoxy-D-xylulose 5-phosphate: Arg-50 and His-55. The active-site Proton acceptor is the Glu-75. Thr-105 serves as a coordination point for 1-deoxy-D-xylulose 5-phosphate. The Proton donor role is filled by His-196. 3-amino-2-oxopropyl phosphate is bound by residues Gly-197 and 218-219 (GH).

Belongs to the PNP synthase family. Homooctamer; tetramer of dimers.

It localises to the cytoplasm. The catalysed reaction is 3-amino-2-oxopropyl phosphate + 1-deoxy-D-xylulose 5-phosphate = pyridoxine 5'-phosphate + phosphate + 2 H2O + H(+). Its pathway is cofactor biosynthesis; pyridoxine 5'-phosphate biosynthesis; pyridoxine 5'-phosphate from D-erythrose 4-phosphate: step 5/5. Functionally, catalyzes the complicated ring closure reaction between the two acyclic compounds 1-deoxy-D-xylulose-5-phosphate (DXP) and 3-amino-2-oxopropyl phosphate (1-amino-acetone-3-phosphate or AAP) to form pyridoxine 5'-phosphate (PNP) and inorganic phosphate. This Pseudomonas fluorescens (strain SBW25) protein is Pyridoxine 5'-phosphate synthase.